Reading from the N-terminus, the 2104-residue chain is Myosin type-2 heavy chain 2 (2104 aa).

Residues 35–85 form the Myosin N-terminal SH3-like domain; the sequence is DERTWIWIPDSKESFVKAWIVEDLGEKYRVKLERDGSERIVDGFDAEKVNP. Positions 89 to 767 constitute a Myosin motor domain; the sequence is DMVDDMAALT…VLGSLEDRRN (679 aa). 182–189 lines the ATP pocket; the sequence is GESGAGKT. Residues 646 to 660 are actin-binding; that stretch reads LSSLMHQLEATQPHF. The stretch at 829 to 2104 forms a coiled coil; that stretch reads LGTTQTDEYL…RSNRSPSVLR (1276 aa). Disordered stretches follow at residues 1245–1278 and 1398–1426; these read NRSV…DGNN and MEFT…SKRS. Residues 1246–1259 are compositionally biased toward polar residues; sequence RSVTQHTLDGNSPH. A compositionally biased stretch (basic and acidic residues) spans 1261–1278; that stretch reads SFEEKHSGDPLKRIDGNN. The span at 1409–1424 shows a compositional bias: polar residues; the sequence is SKISNLPSSQPGSPSK. Ser1421 carries the post-translational modification Phosphoserine.

This sequence belongs to the TRAFAC class myosin-kinesin ATPase superfamily. Myosin family. As to quaternary structure, binds to cdc4 and rlc1.

Stabilizes the F-actin cables forming the F-actin ring that surrounds the nucleus during interphase. May work in conjunction with myo2. The chain is Myosin type-2 heavy chain 2 (myo3) from Schizosaccharomyces pombe (strain 972 / ATCC 24843) (Fission yeast).